The following is a 362-amino-acid chain: Phosphoserine aminotransferase (362 aa).

L-glutamate contacts are provided by Ser-9 and Arg-42. Pyridoxal 5'-phosphate-binding positions include 76 to 77, Trp-102, Thr-153, Asp-174, and Gln-197; that span reads GR. At Lys-198 the chain carries N6-(pyridoxal phosphate)lysine. 239-240 contributes to the pyridoxal 5'-phosphate binding site; it reads NT.

It belongs to the class-V pyridoxal-phosphate-dependent aminotransferase family. SerC subfamily. In terms of assembly, homodimer. The cofactor is pyridoxal 5'-phosphate.

It is found in the cytoplasm. The enzyme catalyses O-phospho-L-serine + 2-oxoglutarate = 3-phosphooxypyruvate + L-glutamate. It catalyses the reaction 4-(phosphooxy)-L-threonine + 2-oxoglutarate = (R)-3-hydroxy-2-oxo-4-phosphooxybutanoate + L-glutamate. It functions in the pathway amino-acid biosynthesis; L-serine biosynthesis; L-serine from 3-phospho-D-glycerate: step 2/3. Its pathway is cofactor biosynthesis; pyridoxine 5'-phosphate biosynthesis; pyridoxine 5'-phosphate from D-erythrose 4-phosphate: step 3/5. In terms of biological role, catalyzes the reversible conversion of 3-phosphohydroxypyruvate to phosphoserine and of 3-hydroxy-2-oxo-4-phosphonooxybutanoate to phosphohydroxythreonine. The polypeptide is Phosphoserine aminotransferase (Klebsiella pneumoniae (strain 342)).